A 314-amino-acid chain; its full sequence is Coiled-coil domain-containing protein 42 like-2 (314 aa).

Coiled coils occupy residues 34–139 (RLLE…RQEK) and 175–233 (NKLL…WESR).

This sequence belongs to the CFAP73 family.

This is Coiled-coil domain-containing protein 42 like-2 from Xenopus laevis (African clawed frog).